A 901-amino-acid polypeptide reads, in one-letter code: Putative receptor protein kinase CRINKLY4 (901 aa).

The first 24 residues, 1-24 (MDHVPALVLAGCCFLALLPGWACG), serve as a signal peptide directing secretion. Topologically, residues 25-423 (LGSMSSIAVS…SRKLMAFQMR (399 aa)) are extracellular. Tandem repeats lie at residues 33-68 (VSYGEDGPVFCGLNSDGSHLVACFGADASVLYGAPP), 72-107 (FLGLTAGDGFVCGLLLDTRQPYCWGSNSYVKSGVPQ), 125-160 (LCALRAAQDGGRGSSAATSLIDCWGYNMTATHAVDE), 162-195 (VSTVSAGSVFNCGLFARNRTVFCWGDETVSGVVG), 203-236 (FQSIGAGGYHVCGVLENAQVFCWGRSLEMQQVVP), 253-287 (MSTVVGGRFHACGIRSLDHQVACWGFTLHNSTSPP), and 292-330 (MYALVAGDYFTCGVPAETSLMPRCWGNSGPLALPMAVPP). The segment at 33 to 330 (VSYGEDGPVF…PLALPMAVPP (298 aa)) is 7 X 36 AA repeats. Residues Asn151 and Asn179 are each glycosylated (N-linked (GlcNAc...) asparagine). An N-linked (GlcNAc...) asparagine glycan is attached at Asn282. 3 disulfides stabilise this stretch: Cys338–Cys365, Cys368–Cys382, and Cys372–Cys390. The TNFR-Cys repeat unit spans residues 357 to 391 (CKPANSRLCLPCSTGCPEGLYESSPCNATADRVCQ). Asn383 carries an N-linked (GlcNAc...) asparagine glycan. Residues 424–444 (IFVAEIVFAVVLVLSVSVTTC) traverse the membrane as a helical segment. The Cytoplasmic segment spans residues 445–901 (LYVRHKLRHC…QENLYLQHNF (457 aa)). The region spanning 505–712 (FSEDSQVGKG…EILSGRKAID (208 aa)) is the Protein kinase domain. Residues 511–519 (VGKGSFSCV) and Lys533 each bind ATP. Residue Asp634 is the Proton acceptor of the active site. Residues 845–876 (VTSSQRRKSSASEADIVGRRATDGRNVGSSIG) form a disordered region.

The protein belongs to the protein kinase superfamily. Ser/Thr protein kinase family. As to quaternary structure, homodimer.

The protein localises to the cell membrane. The protein resides in the endosome. Its subcellular location is the multivesicular body membrane. The enzyme catalyses L-seryl-[protein] + ATP = O-phospho-L-seryl-[protein] + ADP + H(+). The catalysed reaction is L-threonyl-[protein] + ATP = O-phospho-L-threonyl-[protein] + ADP + H(+). In terms of biological role, putative receptor protein kinase. Could play a role in a differentiation signal. The CRINKLY4 (CR4) mutation affects leaf epidermis differentiation such that cell size and morphology are altered, and surface functions are compromised, allowing graft-like fusions between organs. This Zea mays (Maize) protein is Putative receptor protein kinase CRINKLY4 (CR4).